Here is a 453-residue protein sequence, read N- to C-terminus: MRYLPLTPEDRADMLGVIGAETIDALFVDVPAVAYRKDPVDLPFHAGELEVEREMLALSRRNRSASEGPFFVGAGAYRHHVPATVDHIIQRSEFLTSYTPYQPEIAQGTLQVLFEFQTQVAALTGMEVANASLYDGSTATAEAVMMATRVTRRGKAVLSGGVHPHYVGTVETLAHAAGVATERLKAAIDAEDAVIAAIDADTACVVVQTPNVFGTATDVSKIAAAAQAAGALLIVVTTEAVSYGLLKSPGEMGADIVVAEGQSIGNGLNFGGPYVGLFACKEKYVRQAPGRLCGETVDADGRRGFVLTLSTREQHIRRDKATSNICTNSGLCALAFSIHMSLLGEKGLRQLALVNHHKAVKLRDALAAVPGVEVLTPRFFNEFAIKVPGNAAELVETLAANGVIGGVPFSRLDPGAGLDNVLLVAATETTPDSDIALFSKALSKVLAPKGSNQ.

Belongs to the GcvP family. N-terminal subunit subfamily. As to quaternary structure, the glycine cleavage system is composed of four proteins: P, T, L and H. In this organism, the P 'protein' is a heterodimer of two subunits.

The catalysed reaction is N(6)-[(R)-lipoyl]-L-lysyl-[glycine-cleavage complex H protein] + glycine + H(+) = N(6)-[(R)-S(8)-aminomethyldihydrolipoyl]-L-lysyl-[glycine-cleavage complex H protein] + CO2. Its function is as follows. The glycine cleavage system catalyzes the degradation of glycine. The P protein binds the alpha-amino group of glycine through its pyridoxal phosphate cofactor; CO(2) is released and the remaining methylamine moiety is then transferred to the lipoamide cofactor of the H protein. The polypeptide is Probable glycine dehydrogenase (decarboxylating) subunit 1 (Caulobacter sp. (strain K31)).